Reading from the N-terminus, the 296-residue chain is Small ribosomal subunit protein uS2 (296 aa).

2 disordered regions span residues 1–24 (MNTK…TQSQ) and 270–296 (HELK…EASQ).

This sequence belongs to the universal ribosomal protein uS2 family.

The polypeptide is Small ribosomal subunit protein uS2 (Mycoplasmopsis synoviae (strain 53) (Mycoplasma synoviae)).